A 351-amino-acid polypeptide reads, in one-letter code: Uroporphyrinogen decarboxylase (351 aa).

Substrate is bound by residues arginine 25 to arginine 29, phenylalanine 43, aspartate 74, tyrosine 151, serine 206, and histidine 325.

The protein belongs to the uroporphyrinogen decarboxylase family. Homodimer.

The protein localises to the cytoplasm. It carries out the reaction uroporphyrinogen III + 4 H(+) = coproporphyrinogen III + 4 CO2. It participates in porphyrin-containing compound metabolism; protoporphyrin-IX biosynthesis; coproporphyrinogen-III from 5-aminolevulinate: step 4/4. Functionally, catalyzes the decarboxylation of four acetate groups of uroporphyrinogen-III to yield coproporphyrinogen-III. The sequence is that of Uroporphyrinogen decarboxylase from Chlorobaculum tepidum (strain ATCC 49652 / DSM 12025 / NBRC 103806 / TLS) (Chlorobium tepidum).